Consider the following 123-residue polypeptide: Gamma-synuclein (123 aa).

2 consecutive repeat copies span residues 20-30 and 31-41. Residues 20–67 form a 4 X 11 AA tandem repeats of [EGSA]-K-T-K-[EQ]-[GQ]-V-X(4) region; that stretch reads EKTKQGVTEAAEKTKEGVMYVGTKTKGERGTSVTSVAEKTKEQANAVS. A 3; approximate repeat occupies 42-56; it reads TKTKGERGTSVTSVA. Residues 57 to 67 form repeat 4; that stretch reads EKTKEQANAVS. Residues Ser67 and Ser72 each carry the phosphoserine modification. Positions 93-123 are disordered; the sequence is GVVRKEDLEPPAQDQEAKEQEEGEEAKSGGD. The span at 107-123 shows a compositional bias: basic and acidic residues; sequence QEAKEQEEGEEAKSGGD. Ser120 is subject to Phosphoserine; by BARK1, CaMK2 and CK2.

The protein belongs to the synuclein family. May be a centrosome-associated protein. Interacts with MYOC; affects its secretion and its aggregation. Post-translationally, phosphorylated. Phosphorylation by GRK5 appears to occur on residues distinct from the residue phosphorylated by other kinases. In terms of tissue distribution, specifically expressed in the peripheral nervous system. High expression in motoneurons of the brainstem. Also found in neurons of many other brain regions including the cerebellar cortex, thalamus, hypothalamus and CA1, CA2, CA3 and CA4 regions of the hippocampus.

It is found in the cytoplasm. The protein localises to the perinuclear region. The protein resides in the cytoskeleton. It localises to the microtubule organizing center. Its subcellular location is the centrosome. It is found in the spindle. Plays a role in neurofilament network integrity. May be involved in modulating axonal architecture during development and in the adult. In vitro, increases the susceptibility of neurofilament-H to calcium-dependent proteases. May also function in modulating the keratin network in skin. Activates the MAPK and Elk-1 signal transduction pathway. In Rattus norvegicus (Rat), this protein is Gamma-synuclein (Sncg).